A 588-amino-acid polypeptide reads, in one-letter code: Retrograde regulation protein 2 (588 aa).

The protein belongs to the GppA/Ppx family.

Functionally, required for a novel path of interorganelle communication between mitochondria, peroxisomes and the nucleus, thereby maintaining a functional metabolic interaction between the tricarboxylic acid and glyoxylate cycles. In particular, required for the retrograde expression of the peroxisomal isoform of citrate synthase, CIT2. This Saccharomyces cerevisiae (strain ATCC 204508 / S288c) (Baker's yeast) protein is Retrograde regulation protein 2 (RTG2).